Here is a 275-residue protein sequence, read N- to C-terminus: Probable 2' cyclic ADP-D-ribose synthase TcpB (275 aa).

Residues 17-32 show a composition bias toward basic and acidic residues; sequence RLKADDSREMSKEKQA. Residues 17–66 form a disordered region; the sequence is RLKADDSREMSKEKQAQSKAHKAQQAISSAKSLSTQKSKMSELERATRDG. Over residues 39-48 the composition is skewed to low complexity; it reads AQQAISSAKS. A compositionally biased stretch (basic and acidic residues) spans 55 to 64; the sequence is KMSELERATR. Positions 142-275 constitute a TIR domain; it reads EEYDFFISHA…EIAKELHSLI (134 aa). NAD(+) contacts are provided by residues 151-152 and lysine 181; that span reads AS. Residue glutamate 217 is part of the active site.

As to quaternary structure, homodimer. Interacts with host TIRAP, and probably host MYD88. Interacts with host TLR4, abolishes the interaction of host TIRAP with TLR4.

It is found in the secreted. Its subcellular location is the host cell membrane. The enzyme catalyses NAD(+) + H2O = ADP-D-ribose + nicotinamide + H(+). It carries out the reaction NAD(+) = 2'cADPR + nicotinamide + H(+). Functionally, virulence factor that interferes with host Toll-like receptor 2 (TLR2) and TLR4 signaling, resulting in the reduction of dendritic cell maturation, inhibition of pro-inflammatory cytokine secretion and impaired NF-kappa-B activation in macrophages. Binds host lipids. Has NAD(+) hydrolase (NADase) activity, catalyzes cleavage of NAD(+) into ADP-D-ribose (ADPR) and nicotinamide, also generates a cyclization variant of cyclic ADPR (cADPR), termed v-cADPR (probably 2'cADPR). The chain is Probable 2' cyclic ADP-D-ribose synthase TcpB (tcpB) from Brucella melitensis biotype 2 (strain ATCC 23457).